The following is a 1311-amino-acid chain: Zinc finger protein 521 (1311 aa).

Residues histidine 47–isoleucine 67 form a C2H2-type 1; degenerate zinc finger. The disordered stretch occupies residues aspartate 81–glycine 108. Positions serine 83–glycine 102 are enriched in low complexity. 7 consecutive C2H2-type zinc fingers follow at residues tyrosine 118–histidine 140, phenylalanine 146–histidine 168, tyrosine 174–histidine 196, tyrosine 202–histidine 224, glutamine 246–histidine 269, leucine 281–histidine 304, and asparagine 310–histidine 332. The interval threonine 357–serine 398 is disordered. 2 stretches are compositionally biased toward polar residues: residues proline 359 to methionine 370 and alanine 387 to serine 398. Residues tyrosine 405 to histidine 429 form a C2H2-type 9; degenerate zinc finger. C2H2-type zinc fingers lie at residues histidine 437–histidine 460, tyrosine 477–histidine 500, and phenylalanine 513–histidine 536. A Phosphoserine modification is found at serine 546. The segment at tyrosine 560–histidine 585 adopts a C2H2-type 13; atypical zinc-finger fold. Serine 605 and serine 608 each carry phosphoserine. C2H2-type zinc fingers lie at residues tyrosine 634–histidine 656, leucine 664–histidine 686, tyrosine 694–histidine 717, phenylalanine 722–histidine 745, tyrosine 752–histidine 775, histidine 783–histidine 805, and tyrosine 809–histidine 832. Residues threonine 863–glutamate 883 form a disordered region. The segment at tyrosine 886–aspartate 908 adopts a C2H2-type 21; degenerate zinc-finger fold. 3 C2H2-type zinc fingers span residues tyrosine 930–histidine 952, tyrosine 959–histidine 981, and phenylalanine 1020–histidine 1042. Residues tyrosine 1065–leucine 1083 form a C2H2-type 25; degenerate zinc finger. Positions proline 1105 to glycine 1119 are enriched in low complexity. The tract at residues proline 1105 to leucine 1136 is disordered. 5 consecutive C2H2-type zinc fingers follow at residues threonine 1138–histidine 1161, tyrosine 1195–histidine 1217, histidine 1225–histidine 1247, phenylalanine 1256–histidine 1279, and tyrosine 1286–histidine 1309. A Glycyl lysine isopeptide (Lys-Gly) (interchain with G-Cter in SUMO2) cross-link involves residue lysine 1146.

This sequence belongs to the krueppel C2H2-type zinc-finger protein family. As to quaternary structure, interacts with EBF1. Interacts with SMAD1 and SMAD4. Widely expressed. Expressed in all B-cell stages.

It is found in the nucleus. Its function is as follows. Transcription factor that can both act as an activator or a repressor depending on the context. Involved in BMP signaling and in the regulation of the immature compartment of the hematopoietic system. Associates with SMADs in response to BMP2 leading to activate transcription of BMP target genes. Acts as a transcriptional repressor via its interaction with EBF1, a transcription factor involved specification of B-cell lineage; this interaction preventing EBF1 to bind DNA and activate target genes. The sequence is that of Zinc finger protein 521 (Znf521) from Mus musculus (Mouse).